A 440-amino-acid chain; its full sequence is Acetylornithine deacetylase (440 aa).

His-101 is a binding site for Zn(2+). Asp-103 is a catalytic residue. Asp-133 lines the Zn(2+) pocket. Residue Glu-167 is the Proton acceptor of the active site. Zn(2+)-binding residues include Glu-168 and His-412.

It belongs to the peptidase M20A family. ArgE subfamily. As to quaternary structure, homodimer. Zn(2+) serves as cofactor. Requires Co(2+) as cofactor.

It catalyses the reaction N(2)-acetyl-L-ornithine + H2O = L-ornithine + acetate. The protein operates within amino-acid biosynthesis; L-arginine biosynthesis; L-ornithine from N(2)-acetyl-L-ornithine (linear): step 1/1. In Arabidopsis thaliana (Mouse-ear cress), this protein is Acetylornithine deacetylase.